The following is a 434-amino-acid chain: Serine--tRNA ligase (434 aa).

239-241 contacts L-serine; it reads TAE. 270 to 272 contributes to the ATP binding site; the sequence is RSE. Residue E293 participates in L-serine binding. An ATP-binding site is contributed by 357-360; it reads EISS. Residue S393 coordinates L-serine.

Belongs to the class-II aminoacyl-tRNA synthetase family. Type-1 seryl-tRNA synthetase subfamily. As to quaternary structure, homodimer. The tRNA molecule binds across the dimer.

It is found in the cytoplasm. The enzyme catalyses tRNA(Ser) + L-serine + ATP = L-seryl-tRNA(Ser) + AMP + diphosphate + H(+). It carries out the reaction tRNA(Sec) + L-serine + ATP = L-seryl-tRNA(Sec) + AMP + diphosphate + H(+). It participates in aminoacyl-tRNA biosynthesis; selenocysteinyl-tRNA(Sec) biosynthesis; L-seryl-tRNA(Sec) from L-serine and tRNA(Sec): step 1/1. Its function is as follows. Catalyzes the attachment of serine to tRNA(Ser). Is also able to aminoacylate tRNA(Sec) with serine, to form the misacylated tRNA L-seryl-tRNA(Sec), which will be further converted into selenocysteinyl-tRNA(Sec). This Pseudoalteromonas translucida (strain TAC 125) protein is Serine--tRNA ligase.